The sequence spans 431 residues: 3-phosphoshikimate 1-carboxyvinyltransferase (431 aa).

3-phosphoshikimate-binding residues include lysine 26, serine 27, and arginine 31. Position 26 (lysine 26) interacts with phosphoenolpyruvate. Phosphoenolpyruvate contacts are provided by glycine 99 and arginine 127. 3-phosphoshikimate is bound by residues serine 170, serine 171, glutamine 172, serine 199, glutamate 314, and histidine 343. Glutamine 172 contacts phosphoenolpyruvate. Catalysis depends on glutamate 314, which acts as the Proton acceptor. Residues arginine 347, arginine 388, and lysine 413 each contribute to the phosphoenolpyruvate site.

It belongs to the EPSP synthase family. In terms of assembly, monomer.

Its subcellular location is the cytoplasm. The enzyme catalyses 3-phosphoshikimate + phosphoenolpyruvate = 5-O-(1-carboxyvinyl)-3-phosphoshikimate + phosphate. It functions in the pathway metabolic intermediate biosynthesis; chorismate biosynthesis; chorismate from D-erythrose 4-phosphate and phosphoenolpyruvate: step 6/7. In terms of biological role, catalyzes the transfer of the enolpyruvyl moiety of phosphoenolpyruvate (PEP) to the 5-hydroxyl of shikimate-3-phosphate (S3P) to produce enolpyruvyl shikimate-3-phosphate and inorganic phosphate. This Mycobacterium marinum (strain ATCC BAA-535 / M) protein is 3-phosphoshikimate 1-carboxyvinyltransferase.